We begin with the raw amino-acid sequence, 268 residues long: 4-hydroxy-tetrahydrodipicolinate reductase (268 aa).

NAD(+)-binding positions include glycine 10–methionine 15 and aspartate 36. Arginine 37 lines the NADP(+) pocket. Residues glycine 99–threonine 101 and serine 123–methionine 126 contribute to the NAD(+) site. Histidine 156 (proton donor/acceptor) is an active-site residue. Histidine 157 lines the (S)-2,3,4,5-tetrahydrodipicolinate pocket. Lysine 160 acts as the Proton donor in catalysis. Glycine 166–threonine 167 is a binding site for (S)-2,3,4,5-tetrahydrodipicolinate.

Belongs to the DapB family.

The protein localises to the cytoplasm. It catalyses the reaction (S)-2,3,4,5-tetrahydrodipicolinate + NAD(+) + H2O = (2S,4S)-4-hydroxy-2,3,4,5-tetrahydrodipicolinate + NADH + H(+). The enzyme catalyses (S)-2,3,4,5-tetrahydrodipicolinate + NADP(+) + H2O = (2S,4S)-4-hydroxy-2,3,4,5-tetrahydrodipicolinate + NADPH + H(+). The protein operates within amino-acid biosynthesis; L-lysine biosynthesis via DAP pathway; (S)-tetrahydrodipicolinate from L-aspartate: step 4/4. Functionally, catalyzes the conversion of 4-hydroxy-tetrahydrodipicolinate (HTPA) to tetrahydrodipicolinate. The sequence is that of 4-hydroxy-tetrahydrodipicolinate reductase from Burkholderia thailandensis (strain ATCC 700388 / DSM 13276 / CCUG 48851 / CIP 106301 / E264).